A 200-amino-acid polypeptide reads, in one-letter code: MFRHSSRLLARATTMGWRRPFSTDLPAETAADSTFVEAWKKLIPNVDPPKTPSAYMAPRPATPSSIPSKLTVNFVLPYSSELAGKEVDMVIIPATTGQMGVLPGHVATIAELKPGVMSVHEGNDVSKYFVSGGFAFIHANSFADIIAVEAVPLDRIDANLVQKGLAEFTQKLNTASTDVEKAEAQIGVDVHSALNAALTG.

The N-terminal 21 residues, 1–21 (MFRHSSRLLARATTMGWRRPF), are a transit peptide targeting the mitochondrion.

The protein belongs to the ATPase epsilon chain family. In terms of assembly, F-type ATPases have 2 components, CF(1) - the catalytic core - and CF(0) - the membrane proton channel. CF(1) has five subunits: alpha(3), beta(3), gamma(1), delta(1), epsilon(1). CF(0) has three main subunits: a, b and c.

It is found in the mitochondrion. Its subcellular location is the mitochondrion inner membrane. In terms of biological role, mitochondrial membrane ATP synthase (F(1)F(0) ATP synthase or Complex V) produces ATP from ADP in the presence of a proton gradient across the membrane which is generated by electron transport complexes of the respiratory chain. F-type ATPases consist of two structural domains, F(1) - containing the extramembraneous catalytic core, and F(0) - containing the membrane proton channel, linked together by a central stalk and a peripheral stalk. During catalysis, ATP turnover in the catalytic domain of F(1) is coupled via a rotary mechanism of the central stalk subunits to proton translocation. Part of the complex F(1) domain and of the central stalk which is part of the complex rotary element. Rotation of the central stalk against the surrounding alpha(3)beta(3) subunits leads to hydrolysis of ATP in three separate catalytic sites on the beta subunits. The protein is ATP synthase subunit delta', mitochondrial of Ipomoea batatas (Sweet potato).